The primary structure comprises 208 residues: Orotidine 5'-phosphate decarboxylase (208 aa).

Residues aspartate 7, lysine 29, 57 to 66 (DLKLADIPNT), serine 109, 162 to 172 (PGIGAQGGKAK), glycine 185, and arginine 186 each bind substrate. Lysine 59 acts as the Proton donor in catalysis.

Belongs to the OMP decarboxylase family. Type 1 subfamily. Homodimer.

It catalyses the reaction orotidine 5'-phosphate + H(+) = UMP + CO2. It functions in the pathway pyrimidine metabolism; UMP biosynthesis via de novo pathway; UMP from orotate: step 2/2. Catalyzes the decarboxylation of orotidine 5'-monophosphate (OMP) to uridine 5'-monophosphate (UMP). The chain is Orotidine 5'-phosphate decarboxylase from Pyrococcus abyssi (strain GE5 / Orsay).